We begin with the raw amino-acid sequence, 444 residues long: tRNA-2-methylthio-N(6)-dimethylallyladenosine synthase (444 aa).

Residues Ser-10 to Glu-126 enclose the MTTase N-terminal domain. [4Fe-4S] cluster contacts are provided by Cys-19, Cys-55, Cys-89, Cys-163, Cys-167, and Cys-170. One can recognise a Radical SAM core domain in the interval Arg-149–Glu-379. A TRAM domain is found at Gln-382–Val-444.

It belongs to the methylthiotransferase family. MiaB subfamily. In terms of assembly, monomer. The cofactor is [4Fe-4S] cluster.

It is found in the cytoplasm. The enzyme catalyses N(6)-dimethylallyladenosine(37) in tRNA + (sulfur carrier)-SH + AH2 + 2 S-adenosyl-L-methionine = 2-methylsulfanyl-N(6)-dimethylallyladenosine(37) in tRNA + (sulfur carrier)-H + 5'-deoxyadenosine + L-methionine + A + S-adenosyl-L-homocysteine + 2 H(+). Functionally, catalyzes the methylthiolation of N6-(dimethylallyl)adenosine (i(6)A), leading to the formation of 2-methylthio-N6-(dimethylallyl)adenosine (ms(2)i(6)A) at position 37 in tRNAs that read codons beginning with uridine. This chain is tRNA-2-methylthio-N(6)-dimethylallyladenosine synthase, found in Chlorobaculum tepidum (strain ATCC 49652 / DSM 12025 / NBRC 103806 / TLS) (Chlorobium tepidum).